The primary structure comprises 331 residues: MTIIVTGAAGFIGSNLVKGLNARGENHIVAVDNLHRADKFHNLVDCEIRDYLDKDDFLSRFERGEFGRVRAVFHLGACTDTMEQDGRYLMENNYRYSKTLMELCLAQDTQFIYASSAAVYGESHSFREAREYERPLSVYGYSKFLFDQAVRNRLDGALSQVVGLRYFNVYGPGEAHKARMASIVCQQFEQFRAEGTVKLFGEHGGHGPGCQSHDFVSIDDVVKVNLFFLDHPRRSGIFNVGSGHARSFNDVACVVVNTLRAAEDKPPLALEELVQEGLLEYLRFPDALRGRYQSFTQSDSSRLREAGYTAPFVAMEEGVARYCQWLLERGQ.

NADP(+) contacts are provided by residues 11-12 (FI), 32-33 (DN), lysine 39, lysine 54, 75-79 (LGACT), and asparagine 92. Tyrosine 139 serves as the catalytic Proton acceptor. NADP(+) is bound at residue lysine 143. Substrate is bound at residue asparagine 168. Residues valine 169 and lysine 177 each contribute to the NADP(+) site. Residue lysine 177 is the Proton acceptor of the active site. Substrate-binding positions include arginine 179, glutamine 186, 200-203 (FGEH), histidine 213, and tyrosine 292.

It belongs to the NAD(P)-dependent epimerase/dehydratase family. HldD subfamily. Homopentamer. The cofactor is NADP(+).

The enzyme catalyses ADP-D-glycero-beta-D-manno-heptose = ADP-L-glycero-beta-D-manno-heptose. Its pathway is nucleotide-sugar biosynthesis; ADP-L-glycero-beta-D-manno-heptose biosynthesis; ADP-L-glycero-beta-D-manno-heptose from D-glycero-beta-D-manno-heptose 7-phosphate: step 4/4. In terms of biological role, catalyzes the interconversion between ADP-D-glycero-beta-D-manno-heptose and ADP-L-glycero-beta-D-manno-heptose via an epimerization at carbon 6 of the heptose. The protein is ADP-L-glycero-D-manno-heptose-6-epimerase of Cupriavidus pinatubonensis (strain JMP 134 / LMG 1197) (Cupriavidus necator (strain JMP 134)).